The following is a 699-amino-acid chain: Long-chain-fatty-acid--CoA ligase 1 (699 aa).

N-acetylmethionine is present on M1. Y9 carries the 3'-nitrotyrosine modification. Residues 25–45 traverse the membrane as a helical; Signal-anchor for type III membrane protein segment; that stretch reads LPTNTLMGFGAFAALTTFWYA. Residues 46 to 699 are Cytoplasmic-facing; the sequence is TRPKALKPPC…IDELYSTIKI (654 aa). Residue Y85 is modified to Phosphotyrosine. The residue at position 86 (Y86) is a 3'-nitrotyrosine. S136 carries O-linked (GlcNAc) serine glycosylation. N6-acetyllysine is present on residues K208, K357, and K387. Phosphoserine is present on S621. Residue K633 is modified to N6-acetyllysine.

It belongs to the ATP-dependent AMP-binding enzyme family. It depends on Mg(2+) as a cofactor. In terms of tissue distribution, liver, heart, epididymal adipose and to a lesser extent brain, small intestine and lung.

It localises to the mitochondrion outer membrane. It is found in the peroxisome membrane. The protein localises to the microsome membrane. The protein resides in the endoplasmic reticulum membrane. The enzyme catalyses a long-chain fatty acid + ATP + CoA = a long-chain fatty acyl-CoA + AMP + diphosphate. It carries out the reaction (5Z,8Z,11Z,14Z)-eicosatetraenoate + ATP + CoA = (5Z,8Z,11Z,14Z)-eicosatetraenoyl-CoA + AMP + diphosphate. The catalysed reaction is 3,7,11,15-tetramethylhexadecanoate + ATP + CoA = phytanoyl-CoA + AMP + diphosphate. It catalyses the reaction hexadecanoate + ATP + CoA = hexadecanoyl-CoA + AMP + diphosphate. The enzyme catalyses (E)-hexadec-2-enoate + ATP + CoA = (2E)-hexadecenoyl-CoA + AMP + diphosphate. It carries out the reaction 2,6,10,14-tetramethylpentadecanoate + ATP + CoA = pristanoyl-CoA + AMP + diphosphate. The catalysed reaction is 14,15-epoxy-(5Z,8Z,11Z)-eicosatrienoate + ATP + CoA = 14,15-epoxy-(5Z,8Z,11Z)-eicosatrienoyl-CoA + AMP + diphosphate. It catalyses the reaction 5-hydroxy-(6E,8Z,11Z,14Z)-eicosatetraenoate + ATP + CoA = 5-hydroxy-(6E,8Z,11Z,14Z)-eicosatetraenoyl-CoA + AMP + diphosphate. The enzyme catalyses 12-hydroxy-(5Z,8Z,10E,14Z)-eicosatetraenoate + ATP + CoA = 12-hydroxy-(5Z,8Z,10E,14Z)-eicosatetraenoyl-CoA + AMP + diphosphate. It carries out the reaction 15-hydroxy-(5Z,8Z,11Z,13E)-eicosatetraenoate + ATP + CoA = 15-hydroxy-(5Z,8Z,11Z,13E)-eicosatetraenoyl-CoA + AMP + diphosphate. The catalysed reaction is (9Z)-octadecenoate + ATP + CoA = (9Z)-octadecenoyl-CoA + AMP + diphosphate. Its activity is regulated as follows. Inhibited at high temperature and by arachidonate. Its function is as follows. Catalyzes the conversion of long-chain fatty acids to their active form acyl-CoAs for both synthesis of cellular lipids, and degradation via beta-oxidation. Preferentially uses palmitoleate, oleate and linoleate. Preferentially activates arachidonate than epoxyeicosatrienoic acids (EETs) or hydroxyeicosatrienoic acids (HETEs). This is Long-chain-fatty-acid--CoA ligase 1 from Rattus norvegicus (Rat).